The chain runs to 504 residues: Maturase K (504 aa).

The protein belongs to the intron maturase 2 family. MatK subfamily.

Its subcellular location is the plastid. It is found in the chloroplast. Functionally, usually encoded in the trnK tRNA gene intron. Probably assists in splicing its own and other chloroplast group II introns. The chain is Maturase K from Quercus cerris (Turkey oak).